The primary structure comprises 261 residues: Thiamine thiazole synthase (261 aa).

Residues Ala33, 52–53 (ER), Gly60, Val124, and 152–154 (HVD) each bind NAD(+). Residues Asp154 and His169 each contribute to the Fe cation site. Met219 provides a ligand contact to NAD(+). Arg229 contributes to the glycine binding site.

The protein belongs to the THI4 family. In terms of assembly, homooctamer; tetramer of dimers. It depends on Fe(2+) as a cofactor.

The catalysed reaction is hydrogen sulfide + glycine + NAD(+) = ADP-5-ethyl-4-methylthiazole-2-carboxylate + nicotinamide + 3 H2O + H(+). It functions in the pathway cofactor biosynthesis; thiamine diphosphate biosynthesis. Involved in the biosynthesis of the thiazole moiety of thiamine. Catalyzes the conversion of NAD and glycine to adenosine diphosphate 5-(2-hydroxyethyl)-4-methylthiazole-2-carboxylate (ADT), an adenylated thiazole intermediate, using free sulfide as a source of sulfur. This Pyrobaculum islandicum (strain DSM 4184 / JCM 9189 / GEO3) protein is Thiamine thiazole synthase.